The chain runs to 194 residues: 7-methyl-GTP pyrophosphatase (194 aa).

D69 acts as the Proton acceptor in catalysis.

The protein belongs to the Maf family. YceF subfamily. A divalent metal cation is required as a cofactor.

The protein localises to the cytoplasm. It catalyses the reaction N(7)-methyl-GTP + H2O = N(7)-methyl-GMP + diphosphate + H(+). Nucleoside triphosphate pyrophosphatase that hydrolyzes 7-methyl-GTP (m(7)GTP). May have a dual role in cell division arrest and in preventing the incorporation of modified nucleotides into cellular nucleic acids. This is 7-methyl-GTP pyrophosphatase (yceF) from Salmonella typhi.